The sequence spans 976 residues: uncharacterized protein (976 aa).

This is an uncharacterized protein from Acanthamoeba polyphaga (Amoeba).